The sequence spans 275 residues: Bis(5'-nucleosyl)-tetraphosphatase, symmetrical (275 aa).

The protein belongs to the Ap4A hydrolase family.

The enzyme catalyses P(1),P(4)-bis(5'-adenosyl) tetraphosphate + H2O = 2 ADP + 2 H(+). Hydrolyzes diadenosine 5',5'''-P1,P4-tetraphosphate to yield ADP. This chain is Bis(5'-nucleosyl)-tetraphosphatase, symmetrical, found in Hamiltonella defensa subsp. Acyrthosiphon pisum (strain 5AT).